The primary structure comprises 167 residues: Peptide deformylase (167 aa).

Fe cation-binding residues include Cys91 and His133. Residue Glu134 is part of the active site. His137 contributes to the Fe cation binding site.

The protein belongs to the polypeptide deformylase family. The cofactor is Fe(2+).

It carries out the reaction N-terminal N-formyl-L-methionyl-[peptide] + H2O = N-terminal L-methionyl-[peptide] + formate. Its function is as follows. Removes the formyl group from the N-terminal Met of newly synthesized proteins. Requires at least a dipeptide for an efficient rate of reaction. N-terminal L-methionine is a prerequisite for activity but the enzyme has broad specificity at other positions. The sequence is that of Peptide deformylase from Pseudoalteromonas translucida (strain TAC 125).